A 526-amino-acid polypeptide reads, in one-letter code: Keratin, type I cytoskeletal 10 (526 aa).

A compositionally biased stretch (low complexity) spans 1–16 (MSVRFSSNSRQYSSAR). The segment at 1–40 (MSVRFSSNSRQYSSARSGGGGGGGGGGSSIRVSSTKSSLG) is disordered. The segment at 1-144 (MSVRFSSNSR…GDGGGLLSGN (144 aa)) is head. Phosphoserine is present on residues serine 17, serine 38, serine 49, serine 52, and serine 169. Over residues 17-28 (SGGGGGGGGGGS) the composition is skewed to gly residues. The tract at residues 145–180 (EKVTMQNLNDRLASYMNKVRDLEESNYELEGKIKEW) is coil 1A. Residues 145–459 (EKVTMQNLND…SLLEGEGGYV (315 aa)) enclose the IF rod domain. Residues 181–201 (YEKHGNSSQREPRDYSKYYKT) form a linker 1 region. The interval 202-293 (IEDLKGQIVN…KNHEEEMKDL (92 aa)) is coil 1B. Residues 294–316 (QNVSTGDVNVEMNAAPGVDLTQL) are linker 12. Residues 317–455 (LNNMRNQYEQ…QTYRSLLEGE (139 aa)) form a coil 2 region. The tract at residues 456–526 (GGYVGNLQIT…IESETKKHFY (71 aa)) is tail.

The protein belongs to the intermediate filament family. In terms of assembly, heterotetramer of two type I and two type II keratins. Heterodimer with KRT1. Two heterodimers of KRT1 and KRT10 form a heterotetramer. The KRT10 subunit in the heterotetramer is probably disulfide-linked.

The protein localises to the secreted. The protein resides in the extracellular space. It is found in the cell surface. It localises to the cytoplasm. Functionally, plays a role in the establishment of the epidermal barrier on plantar skin. Involved in the maintenance of cell layer development and keratin filament bundles in suprabasal cells of the epithelium. The chain is Keratin, type I cytoskeletal 10 from Rattus norvegicus (Rat).